Reading from the N-terminus, the 135-residue chain is Holo-[acyl-carrier-protein] synthase (135 aa).

Mg(2+) is bound by residues D8 and E58.

This sequence belongs to the P-Pant transferase superfamily. AcpS family. Mg(2+) is required as a cofactor.

The protein localises to the cytoplasm. The catalysed reaction is apo-[ACP] + CoA = holo-[ACP] + adenosine 3',5'-bisphosphate + H(+). Functionally, transfers the 4'-phosphopantetheine moiety from coenzyme A to a Ser of acyl-carrier-protein. This Ligilactobacillus salivarius (strain UCC118) (Lactobacillus salivarius) protein is Holo-[acyl-carrier-protein] synthase.